Here is a 313-residue protein sequence, read N- to C-terminus: Monoglyceride lipase (313 aa).

Residues 121–125 carry the GXSXG motif; it reads GHSMG. The Nucleophile role is filled by Ser-123. Residues Asp-251 and His-281 each act as charge relay system in the active site.

It belongs to the AB hydrolase superfamily. Monoacylglycerol lipase family.

It localises to the lipid droplet. The protein resides in the cytoplasm. Its subcellular location is the endoplasmic reticulum. It is found in the mitochondrion outer membrane. The catalysed reaction is Hydrolyzes glycerol monoesters of long-chain fatty acids.. It catalyses the reaction a fatty acid ethyl ester + H2O = ethanol + a fatty acid + H(+). The enzyme catalyses 1-(9Z-octadecenoyl)-glycerol + H2O = glycerol + (9Z)-octadecenoate + H(+). It carries out the reaction 2-(9Z-octadecenoyl)-glycerol + H2O = glycerol + (9Z)-octadecenoate + H(+). The catalysed reaction is 1-hexadecanoylglycerol + H2O = glycerol + hexadecanoate + H(+). It catalyses the reaction 2-hexadecanoylglycerol + H2O = glycerol + hexadecanoate + H(+). The enzyme catalyses ethyl hexadecanoate + H2O = ethanol + hexadecanoate + H(+). It carries out the reaction ethyl (9Z)-octadecenoate + H2O = ethanol + (9Z)-octadecenoate + H(+). The catalysed reaction is ethyl (9Z)-hexadecenoate + H2O = (9Z)-hexadecenoate + ethanol + H(+). It catalyses the reaction ethyl octadecanoate + H2O = ethanol + octadecanoate + H(+). The protein operates within glycerolipid metabolism; triacylglycerol degradation. Functionally, converts monoacylglycerides (MAG) to free fatty acids and glycerol. Has a strong preference for monounsaturated monoglycerides. Required for efficient degradation of MAG, short-lived intermediates of glycerolipid metabolism which may also function as lipid signaling molecules. Controls inactivation of the signaling lipid N-palmitoylethanolamine (PEA). Involved in fatty acid ethyl ester (FAEE) catabolism. FAEEs are non-oxidative metabolites of ethanol that are transiently incorporated into lipid droplets (LDs). Their mobilization by LD-resident FAEE hydrolases facilitates a controlled metabolism of these potentially toxic lipid metabolites. In Saccharomyces cerevisiae (strain ATCC 204508 / S288c) (Baker's yeast), this protein is Monoglyceride lipase (YJU3).